The sequence spans 540 residues: Glucose-6-phosphate isomerase (540 aa).

Glutamate 350 acts as the Proton donor in catalysis. Active-site residues include histidine 381 and lysine 503.

It belongs to the GPI family.

The protein localises to the cytoplasm. The catalysed reaction is alpha-D-glucose 6-phosphate = beta-D-fructose 6-phosphate. It functions in the pathway carbohydrate biosynthesis; gluconeogenesis. The protein operates within carbohydrate degradation; glycolysis; D-glyceraldehyde 3-phosphate and glycerone phosphate from D-glucose: step 2/4. Functionally, catalyzes the reversible isomerization of glucose-6-phosphate to fructose-6-phosphate. In Paraburkholderia phymatum (strain DSM 17167 / CIP 108236 / LMG 21445 / STM815) (Burkholderia phymatum), this protein is Glucose-6-phosphate isomerase.